Here is a 97-residue protein sequence, read N- to C-terminus: UPF0729 protein GD16342 (97 aa).

The tract at residues 64–97 (KPEKASVGPAEESQNPPLNAIAAETEVDESKKEI) is disordered. Ser-69 is subject to Phosphoserine.

Belongs to the UPF0729 family.

In Drosophila simulans (Fruit fly), this protein is UPF0729 protein GD16342.